The following is a 602-amino-acid chain: Elongation factor 4 (602 aa).

The region spanning 7-189 is the tr-type G domain; the sequence is RNIRNFSIIA…AIVQRIPAPQ (183 aa). Residues 19 to 24 and 136 to 139 contribute to the GTP site; these read DHGKST and NKID.

The protein belongs to the TRAFAC class translation factor GTPase superfamily. Classic translation factor GTPase family. LepA subfamily.

The protein resides in the cell inner membrane. It carries out the reaction GTP + H2O = GDP + phosphate + H(+). Its function is as follows. Required for accurate and efficient protein synthesis under certain stress conditions. May act as a fidelity factor of the translation reaction, by catalyzing a one-codon backward translocation of tRNAs on improperly translocated ribosomes. Back-translocation proceeds from a post-translocation (POST) complex to a pre-translocation (PRE) complex, thus giving elongation factor G a second chance to translocate the tRNAs correctly. Binds to ribosomes in a GTP-dependent manner. The protein is Elongation factor 4 of Xylella fastidiosa (strain M23).